Reading from the N-terminus, the 293-residue chain is Homoserine kinase (293 aa).

Residue 83 to 93 coordinates ATP; that stretch reads PITRGMGSSSA.

This sequence belongs to the GHMP kinase family. Homoserine kinase subfamily.

The protein localises to the cytoplasm. The catalysed reaction is L-homoserine + ATP = O-phospho-L-homoserine + ADP + H(+). The protein operates within amino-acid biosynthesis; L-threonine biosynthesis; L-threonine from L-aspartate: step 4/5. Functionally, catalyzes the ATP-dependent phosphorylation of L-homoserine to L-homoserine phosphate. This Helicobacter pylori (strain J99 / ATCC 700824) (Campylobacter pylori J99) protein is Homoserine kinase.